Consider the following 219-residue polypeptide: Flagellar L-ring protein (219 aa).

The first 14 residues, 1–14 (MKRLVLISLVLAAG), serve as a signal peptide directing secretion. A lipid anchor (N-palmitoyl cysteine) is attached at Cys15. Cys15 is lipidated: S-diacylglycerol cysteine.

Belongs to the FlgH family. As to quaternary structure, the basal body constitutes a major portion of the flagellar organelle and consists of four rings (L,P,S, and M) mounted on a central rod.

It localises to the cell outer membrane. The protein resides in the bacterial flagellum basal body. In terms of biological role, assembles around the rod to form the L-ring and probably protects the motor/basal body from shearing forces during rotation. The chain is Flagellar L-ring protein from Dechloromonas aromatica (strain RCB).